The chain runs to 24 residues: AEEQSFSSTKFSTDQPNLILQGDA.

Residues 1–18 (AEEQSFSSTKFSTDQPNL) show a composition bias toward polar residues. The tract at residues 1–24 (AEEQSFSSTKFSTDQPNLILQGDA) is disordered.

Belongs to the leguminous lectin family. Homotetramer.

This is Lectin from Crotalaria juncea (Sunn hemp).